Consider the following 120-residue polypeptide: Large ribosomal subunit protein P3 (120 aa).

Positions 83–120 (GGGGAAASGGAAAEAPKEEKKEEEKEESDDDMGFSLFD) are disordered.

The protein belongs to the eukaryotic ribosomal protein P1/P2 family. Phosphorylated.

Plays an important role in the elongation step of protein synthesis. In Zea mays (Maize), this protein is Large ribosomal subunit protein P3 (RPP3A).